A 117-amino-acid polypeptide reads, in one-letter code: Ribosome-binding factor A (117 aa).

Belongs to the RbfA family. As to quaternary structure, monomer. Binds 30S ribosomal subunits, but not 50S ribosomal subunits or 70S ribosomes.

It is found in the cytoplasm. Its function is as follows. One of several proteins that assist in the late maturation steps of the functional core of the 30S ribosomal subunit. Associates with free 30S ribosomal subunits (but not with 30S subunits that are part of 70S ribosomes or polysomes). Required for efficient processing of 16S rRNA. May interact with the 5'-terminal helix region of 16S rRNA. This is Ribosome-binding factor A from Streptococcus suis (strain 98HAH33).